Reading from the N-terminus, the 126-residue chain is Aspartate 1-decarboxylase (126 aa).

Residue Ser-25 is the Schiff-base intermediate with substrate; via pyruvic acid of the active site. Ser-25 carries the pyruvic acid (Ser) modification. A substrate-binding site is contributed by Thr-57. The active-site Proton donor is Tyr-58. Residue 73-75 (GGA) coordinates substrate.

It belongs to the PanD family. Heterooctamer of four alpha and four beta subunits. It depends on pyruvate as a cofactor. Is synthesized initially as an inactive proenzyme, which is activated by self-cleavage at a specific serine bond to produce a beta-subunit with a hydroxyl group at its C-terminus and an alpha-subunit with a pyruvoyl group at its N-terminus.

It is found in the cytoplasm. The catalysed reaction is L-aspartate + H(+) = beta-alanine + CO2. It functions in the pathway cofactor biosynthesis; (R)-pantothenate biosynthesis; beta-alanine from L-aspartate: step 1/1. Catalyzes the pyruvoyl-dependent decarboxylation of aspartate to produce beta-alanine. This chain is Aspartate 1-decarboxylase, found in Xanthomonas campestris pv. campestris (strain ATCC 33913 / DSM 3586 / NCPPB 528 / LMG 568 / P 25).